The sequence spans 391 residues: Alkanesulfonate monooxygenase (391 aa).

The protein belongs to the SsuD family.

It carries out the reaction an alkanesulfonate + FMNH2 + O2 = an aldehyde + FMN + sulfite + H2O + 2 H(+). Its function is as follows. Catalyzes the desulfonation of aliphatic sulfonates. The polypeptide is Alkanesulfonate monooxygenase (Rhodopseudomonas palustris (strain TIE-1)).